Consider the following 548-residue polypeptide: Viridiflorene synthase (548 aa).

D301, D305, D444, T448, and E452 together coordinate Mg(2+). Positions 301-305 (DDTFD) match the DDXXD motif motif.

This sequence belongs to the terpene synthase family. Tpsa subfamily. The cofactor is Mg(2+). Expressed in stem and leaf trichomes. Detected in roots, fruits and flowers.

It localises to the cytoplasm. The catalysed reaction is (2E,6E)-farnesyl diphosphate = viridiflorene + diphosphate. It functions in the pathway secondary metabolite biosynthesis; terpenoid biosynthesis. Its function is as follows. Sesquiterpene synthase involved in the production of viridiflorene from (E,E)-farnesyl diphosphate. Can also use (Z,Z)-FPP to make several unidentified sesquiterpenes. This Solanum lycopersicum (Tomato) protein is Viridiflorene synthase.